Reading from the N-terminus, the 166-residue chain is Cofilin-1 (166 aa).

A2 is modified (N-acetylalanine). S3 and S8 each carry phosphoserine. An ADF-H domain is found at 4–153; that stretch reads GVAVSDGVIK…KDRCTLAEKL (150 aa). K13 carries the N6-acetyllysine modification. T25 carries the post-translational modification Phosphothreonine. Residues 30–34 carry the Nuclear localization signal motif; the sequence is KKRKK. Position 41 is a phosphoserine (S41). Y68 is modified (phosphotyrosine). At K73 the chain carries N6-acetyllysine. K132 participates in a covalent cross-link: Glycyl lysine isopeptide (Lys-Gly) (interchain with G-Cter in SUMO2). At Y140 the chain carries Phosphotyrosine. At K144 the chain carries N6-acetyllysine. S156 bears the Phosphoserine mark.

It belongs to the actin-binding proteins ADF family. As to quaternary structure, can bind G- and F-actin in a 1:1 ratio of cofilin to actin. It is a major component of intranuclear and cytoplasmic actin rods. Interacts with the subcortical maternal complex (SCMC) via interaction with TLE6 and NLRP5. Interacts with C9orf72. In terms of processing, inactivated by phosphorylation on Ser-3. Phosphorylated on Ser-3 in resting cells. Dephosphorylated by PDXP/chronophin; this restores its activity in promoting actin filament depolymerization. The phosphorylation of Ser-24 may prevent recognition of the nuclear localization signal. Phosphorylated via a ARRB1-RAC1-LIMK1-PAK1 cascade upon active ligand stimulation of atypical chemokine receptor ACKR2.

It localises to the nucleus matrix. The protein resides in the cytoplasm. It is found in the cytoskeleton. The protein localises to the cell projection. Its subcellular location is the ruffle membrane. It localises to the lamellipodium membrane. The protein resides in the lamellipodium. It is found in the growth cone. The protein localises to the axon. Binds to F-actin and exhibits pH-sensitive F-actin depolymerizing activity. Important for normal progress through mitosis and normal cytokinesis. In conjunction with the subcortical maternal complex (SCMC), plays an essential role for zygotes to progress beyond the first embryonic cell divisions via regulation of actin dynamics. Required for the centralization of the mitotic spindle and symmetric division of zygotes. Plays a role in the regulation of cell morphology and cytoskeletal organization in epithelial cells. Required for the up-regulation of atypical chemokine receptor ACKR2 from endosomal compartment to cell membrane, increasing its efficiency in chemokine uptake and degradation. Required for neural tube morphogenesis and neural crest cell migration. In Bos taurus (Bovine), this protein is Cofilin-1 (CFL1).